The chain runs to 626 residues: Methanol dehydrogenase [cytochrome c] subunit 1 (626 aa).

The N-terminal stretch at 1 to 27 (MSRFVTSVSALAMLALAPAALSSVAYA) is a signal peptide. Cys-130 and Cys-131 form a disulfide bridge. Residues Glu-204 and Asn-288 each coordinate Ca(2+). The active-site Proton acceptor is Asp-330. Cys-413 and Cys-442 are oxidised to a cystine.

It belongs to the bacterial PQQ dehydrogenase family. As to quaternary structure, heterotetramer composed of 2 alpha and 2 beta subunits. The cofactor is pyrroloquinoline quinone. Ca(2+) is required as a cofactor.

It is found in the cell inner membrane. It catalyses the reaction 2 Fe(III)-[cytochrome cL] + a primary alcohol = 2 Fe(II)-[cytochrome cL] + an aldehyde + 2 H(+). In terms of biological role, catalyzes the oxidation of primary alcohols including methanol. In Methylobacterium organophilum, this protein is Methanol dehydrogenase [cytochrome c] subunit 1 (moxF).